Consider the following 125-residue polypeptide: Large ribosomal subunit protein bL20 (125 aa).

It belongs to the bacterial ribosomal protein bL20 family.

Its function is as follows. Binds directly to 23S ribosomal RNA and is necessary for the in vitro assembly process of the 50S ribosomal subunit. It is not involved in the protein synthesizing functions of that subunit. The chain is Large ribosomal subunit protein bL20 from Zymomonas mobilis subsp. mobilis (strain ATCC 31821 / ZM4 / CP4).